The primary structure comprises 155 residues: Small ribosomal subunit protein uS7 (155 aa).

This sequence belongs to the universal ribosomal protein uS7 family. In terms of assembly, part of the 30S ribosomal subunit. Contacts proteins S9 and S11.

One of the primary rRNA binding proteins, it binds directly to 16S rRNA where it nucleates assembly of the head domain of the 30S subunit. Is located at the subunit interface close to the decoding center, probably blocks exit of the E-site tRNA. The polypeptide is Small ribosomal subunit protein uS7 (Chlorobium phaeovibrioides (strain DSM 265 / 1930) (Prosthecochloris vibrioformis (strain DSM 265))).